We begin with the raw amino-acid sequence, 203 residues long: N-(5'-phosphoribosyl)anthranilate isomerase (203 aa).

Belongs to the TrpF family.

The catalysed reaction is N-(5-phospho-beta-D-ribosyl)anthranilate = 1-(2-carboxyphenylamino)-1-deoxy-D-ribulose 5-phosphate. It functions in the pathway amino-acid biosynthesis; L-tryptophan biosynthesis; L-tryptophan from chorismate: step 3/5. The sequence is that of N-(5'-phosphoribosyl)anthranilate isomerase from Caldanaerobacter subterraneus subsp. tengcongensis (strain DSM 15242 / JCM 11007 / NBRC 100824 / MB4) (Thermoanaerobacter tengcongensis).